The chain runs to 372 residues: Glutamate 5-kinase (372 aa).

Lys-14 is a binding site for ATP. 3 residues coordinate substrate: Ser-54, Asp-141, and Asn-153. 173 to 174 (TD) contributes to the ATP binding site. In terms of domain architecture, PUA spans 280-358 (RGTLVLDDGA…DAIVGLLGYM (79 aa)).

This sequence belongs to the glutamate 5-kinase family.

It localises to the cytoplasm. It carries out the reaction L-glutamate + ATP = L-glutamyl 5-phosphate + ADP. It participates in amino-acid biosynthesis; L-proline biosynthesis; L-glutamate 5-semialdehyde from L-glutamate: step 1/2. Catalyzes the transfer of a phosphate group to glutamate to form L-glutamate 5-phosphate. The protein is Glutamate 5-kinase of Pseudomonas fluorescens (strain Pf0-1).